The following is a 387-amino-acid chain: Phosphoglycerate kinase (387 aa).

Substrate contacts are provided by residues 21–23 (DLN), arginine 36, 59–62 (HLGR), arginine 113, and arginine 146. ATP contacts are provided by residues lysine 197, glutamate 314, and 340–343 (GGDT).

This sequence belongs to the phosphoglycerate kinase family. In terms of assembly, monomer.

Its subcellular location is the cytoplasm. The enzyme catalyses (2R)-3-phosphoglycerate + ATP = (2R)-3-phospho-glyceroyl phosphate + ADP. It functions in the pathway carbohydrate degradation; glycolysis; pyruvate from D-glyceraldehyde 3-phosphate: step 2/5. The polypeptide is Phosphoglycerate kinase (Aeromonas salmonicida (strain A449)).